The chain runs to 337 residues: tRNA N6-adenosine threonylcarbamoyltransferase (337 aa).

Residues histidine 111 and histidine 115 each contribute to the Fe cation site. Substrate-binding positions include 134–138 (LVSGG), aspartate 167, glycine 180, and asparagine 272. Residue aspartate 300 participates in Fe cation binding.

The protein belongs to the KAE1 / TsaD family. The cofactor is Fe(2+).

It localises to the cytoplasm. The enzyme catalyses L-threonylcarbamoyladenylate + adenosine(37) in tRNA = N(6)-L-threonylcarbamoyladenosine(37) in tRNA + AMP + H(+). In terms of biological role, required for the formation of a threonylcarbamoyl group on adenosine at position 37 (t(6)A37) in tRNAs that read codons beginning with adenine. Is involved in the transfer of the threonylcarbamoyl moiety of threonylcarbamoyl-AMP (TC-AMP) to the N6 group of A37, together with TsaE and TsaB. TsaD likely plays a direct catalytic role in this reaction. This is tRNA N6-adenosine threonylcarbamoyltransferase from Shewanella loihica (strain ATCC BAA-1088 / PV-4).